The following is a 175-amino-acid chain: DELTA-stichotoxin-Hcr4a (175 aa).

A plays an important role in the hemolytic activity region spans residues 1–10; the sequence is ALAGAIIAGA. An N-terminal region region spans residues 9–28; that stretch reads GASLTFQILDKVLAELGQVS. Phosphocholine-binding residues include serine 52, valine 85, serine 103, proline 105, tyrosine 131, tyrosine 135, and tyrosine 136. The segment at 103–118 is trp-rich region, which is important for the binding to lipid membrane; sequence SVPFDYNLYSNWWDVK.

This sequence belongs to the actinoporin family. Sea anemone subfamily. In terms of assembly, octamer or nonamer in membranes. Monomer in the soluble state.

The protein resides in the secreted. The protein localises to the nematocyst. Its subcellular location is the target cell membrane. Its function is as follows. Pore-forming protein that forms cations-selective hydrophilic pores of around 1 nm and causes cardiac stimulation and cytolysis. Pore formation is a multi-step process that involves specific recognition of membrane sphingomyelin (but neither cholesterol nor phosphatidylcholine) using aromatic rich region and adjacent phosphocholine (POC) binding site, firm binding to the membrane (mainly driven by hydrophobic interactions) accompanied by the transfer of the N-terminal region to the lipid-water interface and finally pore formation after oligomerization of monomers. The chain is DELTA-stichotoxin-Hcr4a from Radianthus crispa (Leathery sea anemone).